The chain runs to 360 residues: Variable large protein 14 (360 aa).

Residues 1–18 (MRKRISAIIMTLFMVLAS) form the signal peptide. A lipid anchor (N-palmitoyl cysteine) is attached at cysteine 19. Cysteine 19 carries S-diacylglycerol cysteine lipidation.

Belongs to the variable large protein (Vlp) family. Beta subfamily.

The protein localises to the cell outer membrane. In terms of biological role, the Vlp and Vsp proteins are antigenically distinct proteins, only one vlp or vsp gene is transcriptionally active at any one time. Switching between these genes is a mechanism of host immune response evasion. This chain is Variable large protein 14, found in Borrelia hermsii.